The following is a 117-amino-acid chain: Hydrogenase maturation factor HypA (117 aa).

H2 is a Ni(2+) binding site. 4 residues coordinate Zn(2+): C73, C76, C92, and C95.

Belongs to the HypA/HybF family.

Involved in the maturation of [NiFe] hydrogenases. Required for nickel insertion into the metal center of the hydrogenase. The protein is Hydrogenase maturation factor HypA of Solidesulfovibrio magneticus (strain ATCC 700980 / DSM 13731 / RS-1) (Desulfovibrio magneticus).